The chain runs to 402 residues: MPSVAERILSEKVGEPVEAGETVYVEPDVIMLHDGSGATALRTLRELGVERVESPEKVVLIFDHSVPPSSVEAANRQNELLEFARRHRIEHVHVDEGVCHQVLVEEGYAGPGRVVFGGDSHTPTSGAASALAFGFGGTDMAFALLYGELWIRVPRTVRVHVEGELEEPATAKDLALTVVGELGAGYADYAVLEYTGLPERMSLGDRMCLCNLATEAGAKSAYVPPKEGPEELRPGDADEVIELDASEVEPVVSVPHRVDDVRPVGDVQGVEVTRVFVGSCTNGRYRDVRVFTEILEELDGPHPDVRIVVVPASRRVLERMTEAGLTLKLIRMGVMIAPPGCGPCLGEHLGVLGDDDVCVSTANRNFPGRMGSRRAEIYLASPVTAAVAAAEGELVDPQDVLG.

[4Fe-4S] cluster-binding residues include C280, C341, and C344.

This sequence belongs to the aconitase/IPM isomerase family. LeuC type 2 subfamily. In terms of assembly, heterodimer of LeuC and LeuD. The cofactor is [4Fe-4S] cluster.

It carries out the reaction (2R,3S)-3-isopropylmalate = (2S)-2-isopropylmalate. The protein operates within amino-acid biosynthesis; L-leucine biosynthesis; L-leucine from 3-methyl-2-oxobutanoate: step 2/4. Catalyzes the isomerization between 2-isopropylmalate and 3-isopropylmalate, via the formation of 2-isopropylmaleate. This Methanopyrus kandleri (strain AV19 / DSM 6324 / JCM 9639 / NBRC 100938) protein is 3-isopropylmalate dehydratase large subunit 2.